Consider the following 290-residue polypeptide: Programmed cell death 1 ligand 1 (290 aa).

Residues 1 to 18 (MRIFAGIIFTACCHLLRA) form the signal peptide. The region spanning 19–127 (FTITAPKDLY…YGGADYKRIT (109 aa)) is the Ig-like V-type domain. Over 19–239 (FTITAPKDLY…ATHPPQNRTH (221 aa)) the chain is Extracellular. An N-linked (GlcNAc...) asparagine glycan is attached at Asn-35. 2 disulfide bridges follow: Cys-40/Cys-114 and Cys-154/Cys-208. The Ig-like C2-type domain maps to 133-224 (PYRKINQRIS…PGQNHTAELI (92 aa)). 4 N-linked (GlcNAc...) asparagine glycosylation sites follow: Asn-191, Asn-199, Asn-218, and Asn-236. A helical membrane pass occupies residues 240–260 (WVLLGSILLFLIVVSTVLLFL). Over 261–290 (RKQVRMLDVEKCGVEDTSSKNRNDTQFEET) the chain is Cytoplasmic.

This sequence belongs to the immunoglobulin superfamily. BTN/MOG family. In terms of assembly, interacts with PDCD1. Interacts with CMTM4 and CMTM6. Interacts with CD80. Post-translationally, ubiquitinated; STUB1 likely mediates polyubiquitination of PD-L1/CD274 triggering its degradation. Ubiquitinated by MARCHF8; leading to degradation. Deubiquitinated by USP22; leading to stabilization. In terms of tissue distribution, highly expressed in the heart, thymus, skeletal muscle, and lung. Weakly expressed in the kidney, spleen, thyroid, and liver. Expressed on activated dendritic cells, B-cells and macrophages. Expressed in numerous tumor cells lines of lymphoid origin.

The protein localises to the cell membrane. It localises to the early endosome membrane. Its subcellular location is the recycling endosome membrane. Its function is as follows. Plays a critical role in induction and maintenance of immune tolerance to self. As a ligand for the inhibitory receptor PDCD1/PD-1, modulates the activation threshold of T-cells and limits T-cell effector response. Through a yet unknown activating receptor, may costimulate T-cell subsets that predominantly produce interleukin-10 (IL10). In terms of biological role, the PDCD1-mediated inhibitory pathway is exploited by tumors to attenuate anti-tumor immunity and escape destruction by the immune system, thereby facilitating tumor survival. The interaction with PDCD1/PD-1 inhibits cytotoxic T lymphocytes (CTLs) effector function. The blockage of the PDCD1-mediated pathway results in the reversal of the exhausted T-cell phenotype and the normalization of the anti-tumor response, providing a rationale for cancer immunotherapy. The chain is Programmed cell death 1 ligand 1 (Cd274) from Mus musculus (Mouse).